A 193-amino-acid chain; its full sequence is Xanthine phosphoribosyltransferase (193 aa).

Leucine 20 and threonine 27 together coordinate xanthine. A 5-phospho-alpha-D-ribose 1-diphosphate-binding site is contributed by 128–132; it reads ANGQA. A xanthine-binding site is contributed by lysine 156.

This sequence belongs to the purine/pyrimidine phosphoribosyltransferase family. Xpt subfamily. Homodimer.

It localises to the cytoplasm. It catalyses the reaction XMP + diphosphate = xanthine + 5-phospho-alpha-D-ribose 1-diphosphate. It participates in purine metabolism; XMP biosynthesis via salvage pathway; XMP from xanthine: step 1/1. Converts the preformed base xanthine, a product of nucleic acid breakdown, to xanthosine 5'-monophosphate (XMP), so it can be reused for RNA or DNA synthesis. This chain is Xanthine phosphoribosyltransferase, found in Streptococcus pneumoniae serotype 4 (strain ATCC BAA-334 / TIGR4).